Here is a 232-residue protein sequence, read N- to C-terminus: Cytidylate kinase (232 aa).

Gly-11–Thr-19 serves as a coordination point for ATP.

The protein belongs to the cytidylate kinase family. Type 1 subfamily.

The protein localises to the cytoplasm. The catalysed reaction is CMP + ATP = CDP + ADP. It carries out the reaction dCMP + ATP = dCDP + ADP. The chain is Cytidylate kinase from Desulfitobacterium hafniense (strain Y51).